The following is a 282-amino-acid chain: HTH-type transcriptional activator RhaR (282 aa).

The 99-residue stretch at 179–277 folds into the HTH araC/xylS-type domain; it reads DKLITRLAAS…GMTPSQWRHL (99 aa). DNA-binding regions (H-T-H motif) lie at residues 196 to 217 and 244 to 267; these read DKFC…RQQT and ISDI…TRET.

In terms of assembly, binds DNA as a dimer.

The protein resides in the cytoplasm. Its function is as follows. Activates expression of the rhaSR operon in response to L-rhamnose. In Escherichia coli O1:K1 / APEC, this protein is HTH-type transcriptional activator RhaR.